The following is a 377-amino-acid chain: Chaperone protein DnaJ (377 aa).

One can recognise a J domain in the interval 5-70 (DYYEVLGVGR…NKKAAYDQFG (66 aa)). The segment at 133 to 211 (GLTKELRIPT…CHGDGRVEKT (79 aa)) adopts a CR-type zinc-finger fold. Zn(2+) contacts are provided by Cys146, Cys149, Cys163, Cys166, Cys185, Cys188, Cys199, and Cys202. CXXCXGXG motif repeat units follow at residues 146 to 153 (CDVCDGSG), 163 to 170 (CGTCHGQG), 185 to 192 (CPTCHGRG), and 199 to 206 (CTKCHGDG).

This sequence belongs to the DnaJ family. As to quaternary structure, homodimer. The cofactor is Zn(2+).

It is found in the cytoplasm. Participates actively in the response to hyperosmotic and heat shock by preventing the aggregation of stress-denatured proteins and by disaggregating proteins, also in an autonomous, DnaK-independent fashion. Unfolded proteins bind initially to DnaJ; upon interaction with the DnaJ-bound protein, DnaK hydrolyzes its bound ATP, resulting in the formation of a stable complex. GrpE releases ADP from DnaK; ATP binding to DnaK triggers the release of the substrate protein, thus completing the reaction cycle. Several rounds of ATP-dependent interactions between DnaJ, DnaK and GrpE are required for fully efficient folding. Also involved, together with DnaK and GrpE, in the DNA replication of plasmids through activation of initiation proteins. This is Chaperone protein DnaJ from Shewanella sp. (strain MR-4).